The primary structure comprises 278 residues: 4-hydroxy-tetrahydrodipicolinate reductase (278 aa).

Residues 13–18 (GAAGKM) and 111–113 (GTT) contribute to the NAD(+) site. His167 acts as the Proton donor/acceptor in catalysis. (S)-2,3,4,5-tetrahydrodipicolinate is bound at residue His168. Lys171 (proton donor) is an active-site residue. 177–178 (GT) provides a ligand contact to (S)-2,3,4,5-tetrahydrodipicolinate.

Belongs to the DapB family.

The protein resides in the cytoplasm. The enzyme catalyses (S)-2,3,4,5-tetrahydrodipicolinate + NAD(+) + H2O = (2S,4S)-4-hydroxy-2,3,4,5-tetrahydrodipicolinate + NADH + H(+). It catalyses the reaction (S)-2,3,4,5-tetrahydrodipicolinate + NADP(+) + H2O = (2S,4S)-4-hydroxy-2,3,4,5-tetrahydrodipicolinate + NADPH + H(+). It functions in the pathway amino-acid biosynthesis; L-lysine biosynthesis via DAP pathway; (S)-tetrahydrodipicolinate from L-aspartate: step 4/4. Functionally, catalyzes the conversion of 4-hydroxy-tetrahydrodipicolinate (HTPA) to tetrahydrodipicolinate. The chain is 4-hydroxy-tetrahydrodipicolinate reductase from Mastigocladus laminosus (Fischerella sp.).